A 281-amino-acid polypeptide reads, in one-letter code: Shikimate dehydrogenase (NADP(+)) (281 aa).

Residues 14–16 (SKS) and Thr-61 each bind shikimate. Lys-65 acts as the Proton acceptor in catalysis. Shikimate contacts are provided by Asn-86 and Asp-105. Residues 130-134 (GAGGA), 154-159 (NRTAAK), and Met-221 contribute to the NADP(+) site. Position 223 (Tyr-223) interacts with shikimate. Gly-245 lines the NADP(+) pocket.

Belongs to the shikimate dehydrogenase family. Homodimer.

It catalyses the reaction shikimate + NADP(+) = 3-dehydroshikimate + NADPH + H(+). The protein operates within metabolic intermediate biosynthesis; chorismate biosynthesis; chorismate from D-erythrose 4-phosphate and phosphoenolpyruvate: step 4/7. Functionally, involved in the biosynthesis of the chorismate, which leads to the biosynthesis of aromatic amino acids. Catalyzes the reversible NADPH linked reduction of 3-dehydroshikimate (DHSA) to yield shikimate (SA). In Azoarcus sp. (strain BH72), this protein is Shikimate dehydrogenase (NADP(+)).